A 603-amino-acid chain; its full sequence is NADPH-dependent diflavin oxidoreductase 1 (603 aa).

The region spanning 8 to 152 (VLVLYGSETG…SFVRWTGRLY (145 aa)) is the Flavodoxin-like domain. FMN contacts are provided by residues 14–19 (SETGNA), 61–64 (STTG), 99–108 (LGDSTYLKFN), and Glu-134. One can recognise an FAD-binding FR-type domain in the interval 210–457 (PDGWTATLVG…RKPVLSPIHG (248 aa)). FAD contacts are provided by residues Arg-358, 388–391 (RDFS), and 429–432 (GLCS). Residues Thr-472, 528-529 (SR), and 534-538 (KIYVQ) each bind NADP(+). Trp-603 serves as a coordination point for FAD.

This sequence belongs to the NADPH-dependent diflavin oxidoreductase NDOR1 family. It in the N-terminal section; belongs to the flavodoxin family. In the C-terminal section; belongs to the flavoprotein pyridine nucleotide cytochrome reductase family. In terms of assembly, interacts with DRE2; as part of the cytosolic iron-sulfur (Fe-S) protein assembly (CIA) machinery. FAD serves as cofactor. Requires FMN as cofactor.

The protein localises to the cytoplasm. Its subcellular location is the mitochondrion. It catalyses the reaction 2 oxidized [2Fe-2S]-[protein] + NADPH = 2 reduced [2Fe-2S]-[protein] + NADP(+) + H(+). NADPH-dependent reductase which is a central component of the cytosolic iron-sulfur (Fe-S) protein assembly (CIA) machinery. Transfers electrons from NADPH via its FAD and FMN prosthetic groups to the [2Fe-2S] cluster of DRE2, another key component of the CIA machinery. In turn, this reduced cluster provides electrons for assembly of cytosolic iron-sulfur cluster proteins. Positively controls H(2)O(2)-induced cell death. This Gibberella zeae (strain ATCC MYA-4620 / CBS 123657 / FGSC 9075 / NRRL 31084 / PH-1) (Wheat head blight fungus) protein is NADPH-dependent diflavin oxidoreductase 1.